We begin with the raw amino-acid sequence, 183 residues long: Endoribonuclease YbeY (183 aa).

Zn(2+)-binding residues include histidine 142, histidine 146, and histidine 152.

The protein belongs to the endoribonuclease YbeY family. The cofactor is Zn(2+).

The protein localises to the cytoplasm. Its function is as follows. Single strand-specific metallo-endoribonuclease involved in late-stage 70S ribosome quality control and in maturation of the 3' terminus of the 16S rRNA. The polypeptide is Endoribonuclease YbeY (Trichodesmium erythraeum (strain IMS101)).